We begin with the raw amino-acid sequence, 403 residues long: Glycerophosphocholine acyltransferase 1 (403 aa).

Residues 1 to 112 (MDHLEFDENT…SGKVVRFRDK (112 aa)) lie on the Cytoplasmic side of the membrane. Residues 113 to 133 (LSFALGVSTCILTALLVGMAP) form a helical membrane-spanning segment. Topologically, residues 134–137 (ESMH) are lumenal. Residues 138-155 (LWYTIQLFVYLPLRYYTY) form a helical membrane-spanning segment. At 156–161 (QRKGYE) the chain is on the cytoplasmic side. Residues 162-182 (YFIADFCYWGNILLLVYIWIF) traverse the membrane as a helical segment. Residues 183–186 (PESR) lie on the Lumenal side of the membrane. A helical transmembrane segment spans residues 187 to 207 (RLFILSYSISYGTLAWSVVAW). The Cytoplasmic segment spans residues 208-218 (RNSLLFHSIDK). A helical transmembrane segment spans residues 219–239 (ITSLFIHFFPPLVLHTIVHLT). Asn-240 carries N-linked (GlcNAc...) asparagine glycosylation. Residues 240 to 262 (NKSYLKDRFPAVLKVKKIDLLSS) are Lumenal-facing. The helical transmembrane segment at 263–283 (VEIASFFYALWQIWYYFFIQV) threads the bilayer. The Cytoplasmic segment spans residues 284–322 (GKQKQIQEGRPTSFTWLSKAYSKTKLGRAVAKLPQNLQP). Residues 323–343 (FVFMIIQYLYSITTMLPCSLW) form a helical membrane-spanning segment. The Lumenal segment spans residues 344–352 (YNNKLYSTA). The chain crosses the membrane as a helical span at residues 353–373 (FLALIFGWSVWNGASYYIDVF). Over 374-403 (GRRFQKELEALRQQLAETPTNSGSSSALSR) the chain is Cytoplasmic.

It belongs to the GPC1 family.

It is found in the endoplasmic reticulum membrane. The protein resides in the golgi apparatus membrane. It carries out the reaction sn-glycerol 3-phosphocholine + an acyl-CoA = a 1-acyl-sn-glycero-3-phosphocholine + CoA. The enzyme catalyses sn-glycero-3-phosphoethanolamine + an acyl-CoA = a monoacyl-sn-glycero-3-phosphoethanolamine + CoA. It catalyses the reaction sn-glycero-3-phosphoethanolamine + (9Z)-octadecenoyl-CoA = (9Z-octadecenoyl)-sn-glycero-3-phosphoethanolamine + CoA. Its function is as follows. Glycerophosphocholine acyltransferase (GPCAT) that utilizes acyl-CoA to acylate glycero-3-phosphocholine (GPC), forming lysophosphatidylcholine (LPC). Shows broad acyl specificities with a preference for 16:0-CoA, polyunsaturated acyl-CoA, and the hydroxylated ricinoleoyl-CoA. Also catalyzes the acylation of glycero-3-phosphoethanolamine (GPE) with acyl-CoA. In addition to acyl-CoA, GPCAT efficiently utilizes LPC and lysophosphatidylethanolamine (LPE) as acyl donors in the acylation of GPC. Contributes to the maintenance of phosphatidylcholine (PC) homeostasis and might also have specific functions in acyl editing of PC, such as transferring acyl groups modified at the sn-2 position of PC to the sn-1. The polypeptide is Glycerophosphocholine acyltransferase 1 (Schizosaccharomyces pombe (strain 972 / ATCC 24843) (Fission yeast)).